The following is a 285-amino-acid chain: Secreted LysM effector slp2 (285 aa).

Residues 1 to 16 form the signal peptide; the sequence is MLPITVVTLFAALAAA. The segment at 75–143 is disordered; the sequence is GDAAKAGDAA…KGGDAAKGGN (69 aa). The segment covering 85–116 has biased composition (basic and acidic residues); the sequence is KGGDAKGGDAKGGDAKGGDAKGGKGGDAKGGK. Gly residues predominate over residues 117–139; the sequence is GGDAAKGGKGGDAAKGGKGGDAA. 2 LysM domains span residues 157–201 and 237–281; these read VEHK…VLKI and FTRV…TINL.

The protein belongs to the secreted LysM effector family.

Functionally, might have a role in sequestration of chitin oligosaccharides (breakdown products of fungal cell walls that are released during invasion and act as triggers of host immunity) to dampen host defense. The chain is Secreted LysM effector slp2 from Pyricularia oryzae (strain 70-15 / ATCC MYA-4617 / FGSC 8958) (Rice blast fungus).